The primary structure comprises 165 residues: UPF0303 protein BMA1246 (165 aa).

It belongs to the UPF0303 family.

The chain is UPF0303 protein BMA1246 from Burkholderia mallei (strain ATCC 23344).